The following is a 551-amino-acid chain: Arginine--tRNA ligase (551 aa).

Residues 123–133 (ANPTGPLTIGR) carry the 'HIGH' region motif.

This sequence belongs to the class-I aminoacyl-tRNA synthetase family. Monomer.

It is found in the cytoplasm. It carries out the reaction tRNA(Arg) + L-arginine + ATP = L-arginyl-tRNA(Arg) + AMP + diphosphate. This Chlorobaculum parvum (strain DSM 263 / NCIMB 8327) (Chlorobium vibrioforme subsp. thiosulfatophilum) protein is Arginine--tRNA ligase.